The chain runs to 355 residues: WD repeat domain phosphoinositide-interacting protein 4 (355 aa).

WD repeat units lie at residues 2 to 40 (SQQR…EKGH) and 185 to 225 (AHQS…QLVE). Positions 226–229 (LRRG) match the L/FRRG motif motif. One copy of the WD 3 repeat lies at 230 to 269 (TDPATLYCINFSHDSSFLCSSSDKGTVHIFALKDTKLNRR).

Belongs to the WD repeat PROPPIN family.

It is found in the preautophagosomal structure. Its function is as follows. Component of the autophagy machinery that controls the major intracellular degradation process by which cytoplasmic materials are packaged into autophagosomes and delivered to lysosomes for degradation. Binds phosphatidylinositol 3-phosphate (PtdIns3P). This chain is WD repeat domain phosphoinositide-interacting protein 4 (wdr45), found in Xenopus laevis (African clawed frog).